Consider the following 465-residue polypeptide: Methylenetetrahydrofolate--tRNA-(uracil-5-)-methyltransferase TrmFO (465 aa).

An FAD-binding site is contributed by 10–15; the sequence is GAGLAG.

This sequence belongs to the MnmG family. TrmFO subfamily. Requires FAD as cofactor.

It localises to the cytoplasm. It carries out the reaction uridine(54) in tRNA + (6R)-5,10-methylene-5,6,7,8-tetrahydrofolate + NADH + H(+) = 5-methyluridine(54) in tRNA + (6S)-5,6,7,8-tetrahydrofolate + NAD(+). The catalysed reaction is uridine(54) in tRNA + (6R)-5,10-methylene-5,6,7,8-tetrahydrofolate + NADPH + H(+) = 5-methyluridine(54) in tRNA + (6S)-5,6,7,8-tetrahydrofolate + NADP(+). In terms of biological role, catalyzes the folate-dependent formation of 5-methyl-uridine at position 54 (M-5-U54) in all tRNAs. This Deinococcus radiodurans (strain ATCC 13939 / DSM 20539 / JCM 16871 / CCUG 27074 / LMG 4051 / NBRC 15346 / NCIMB 9279 / VKM B-1422 / R1) protein is Methylenetetrahydrofolate--tRNA-(uracil-5-)-methyltransferase TrmFO.